The primary structure comprises 416 residues: MAIQAPKGTKDILPTESYKWHYLEDKFKNIADSYGYREIRTPVFEYTELFQRGVGETTDVVQKEMYTFLDRAGRSLTLKPEGTSPAVRAFVEGSLYNEAQPTKLFYFTPVLRYENVQKGRLREHHQFGIEAFGSREASLDAEVISLAMRIYEELGVDGIELNINSIGCSKCRKEYNDILKTFLSKQYDNICDTCKTRFHKNPMRILDCKEKSCREIVKDAPLMLHHLCDECREHFESLKMYLEGLGIGYKINPLIVRGLDYYSKTVFEIINKNITICGGGRYDYLIEEVGGPKMPAVGFGMGIERTLLTLSENGIEIPKLPYIDLYIGIIGDKARIKALTLTNKLREKNVRCEYDHMNRSVKAEMKYANKINARFTVILGENEIESGIAKFKRMEDGQQFEISLGDLSAILNLTRM.

The protein belongs to the class-II aminoacyl-tRNA synthetase family. Homodimer.

Its subcellular location is the cytoplasm. It carries out the reaction tRNA(His) + L-histidine + ATP = L-histidyl-tRNA(His) + AMP + diphosphate + H(+). The sequence is that of Histidine--tRNA ligase from Clostridium kluyveri (strain NBRC 12016).